Here is a 512-residue protein sequence, read N- to C-terminus: Probable ubiquitin carboxyl-terminal hydrolase 3 (512 aa).

The segment at 64 to 109 (TSKTKESEKSPKSWSAIAKKHVQGDSPVKKSHSVPVPSDRSEKKSF) is disordered. Positions 133 to 511 (RGFINTGNIC…VAYLLFYTRR (379 aa)) constitute a USP domain. The active-site Nucleophile is the C142. H453 (proton acceptor) is an active-site residue.

Belongs to the peptidase C19 family.

The catalysed reaction is Thiol-dependent hydrolysis of ester, thioester, amide, peptide and isopeptide bonds formed by the C-terminal Gly of ubiquitin (a 76-residue protein attached to proteins as an intracellular targeting signal).. This Schizosaccharomyces pombe (strain 972 / ATCC 24843) (Fission yeast) protein is Probable ubiquitin carboxyl-terminal hydrolase 3 (ubp3).